The chain runs to 173 residues: Co-chaperone protein HscB homolog (173 aa).

A J domain is found at 5 to 77 (CHYALFDLQP…PRRARYLLAI (73 aa)).

Belongs to the HscB family. Interacts with HscA and stimulates its ATPase activity.

Its function is as follows. Co-chaperone involved in the maturation of iron-sulfur cluster-containing proteins. Seems to help targeting proteins to be folded toward HscA. This chain is Co-chaperone protein HscB homolog, found in Pseudomonas entomophila (strain L48).